A 318-amino-acid chain; its full sequence is NADH-ubiquinone oxidoreductase chain 1 (318 aa).

The next 8 helical transmembrane spans lie at 2 to 22 (FLMN…FLTL), 68 to 88 (ISLF…MWIP), 102 to 122 (ILFI…SGWA), 146 to 166 (LAII…SSLI), 171 to 191 (FTWL…STLA), 217 to 237 (AGPF…MNAL), 253 to 273 (EMFT…FLWI), and 294 to 314 (LPLT…MACI).

The protein belongs to the complex I subunit 1 family.

Its subcellular location is the mitochondrion inner membrane. The enzyme catalyses a ubiquinone + NADH + 5 H(+)(in) = a ubiquinol + NAD(+) + 4 H(+)(out). Core subunit of the mitochondrial membrane respiratory chain NADH dehydrogenase (Complex I) that is believed to belong to the minimal assembly required for catalysis. Complex I functions in the transfer of electrons from NADH to the respiratory chain. The immediate electron acceptor for the enzyme is believed to be ubiquinone. The polypeptide is NADH-ubiquinone oxidoreductase chain 1 (MT-ND1) (Tamias sibiricus (Siberian chipmunk)).